We begin with the raw amino-acid sequence, 693 residues long: Polyribonucleotide nucleotidyltransferase (693 aa).

Residues aspartate 489 and aspartate 495 each coordinate Mg(2+). A KH domain is found at 556–615; it reads PQIHVMNINPAKIKDVVGRGGATVKGIVEKTGAQIDTSDSGEVKVFAKDKKSMDMAVAMI. An S1 motif domain is found at 625 to 693; that stretch reads GQVYKGKIVK…GRVKLSLVAR (69 aa).

This sequence belongs to the polyribonucleotide nucleotidyltransferase family. In terms of assembly, component of the RNA degradosome, which is a multiprotein complex involved in RNA processing and mRNA degradation. It depends on Mg(2+) as a cofactor.

It localises to the cytoplasm. The catalysed reaction is RNA(n+1) + phosphate = RNA(n) + a ribonucleoside 5'-diphosphate. In terms of biological role, involved in mRNA degradation. Catalyzes the phosphorolysis of single-stranded polyribonucleotides processively in the 3'- to 5'-direction. The sequence is that of Polyribonucleotide nucleotidyltransferase from Francisella tularensis subsp. holarctica (strain FTNF002-00 / FTA).